We begin with the raw amino-acid sequence, 326 residues long: MREVLLSECIDLLYESHFVISKPFGRSCFDLIAKKGNLRLLIKILKNIDSLSTEQSEELLNISKMLQAVPVIIGTRTRNSVMEEGAVYERYGIKAVTFNTFREQLVGEPPVVYANRGGFFVNIDGKVLRETREKLKISVGELAEVSRVSRKTIYKYEQNEANPSAEVAIKIEEYLDVPLIKGINIMDCIDGLKSQKSRDDAFEKILKEGEDFKIRVIDILGDMGFNLLETTKAPFDAVAEESKGEDAENQNIIFTNIQETENEEIRRKAMIVDEISKILNSHSLLVLEKKTNENKRITSMSISELEKIGDTVDLLDFIEKRKKSTK.

One can recognise an HTH cro/C1-type domain in the interval 128–183; that stretch reads LRETREKLKISVGELAEVSRVSRKTIYKYEQNEANPSAEVAIKIEEYLDVPLIKGI. Positions 139–158 form a DNA-binding region, H-T-H motif; that stretch reads VGELAEVSRVSRKTIYKYEQ.

The chain is Putative HTH-type transcriptional regulatory protein MMP0678 from Methanococcus maripaludis (strain DSM 14266 / JCM 13030 / NBRC 101832 / S2 / LL).